The chain runs to 467 residues: Cytochrome c-552 (467 aa).

The first 27 residues, 1 to 27 (MMKKMTGKSFALSALVAASFMAAGAMA), serve as a signal peptide directing secretion. His-87 provides a ligand contact to heme c. Residues Cys-115, Cys-118, and Lys-119 each coordinate heme. 6 residues coordinate heme c: Cys-153, Cys-156, His-157, Cys-195, Cys-198, and His-199. Ca(2+) contacts are provided by Glu-201, Tyr-202, Lys-250, and Gln-252. Tyr-202 serves as a coordination point for substrate. His-253 is a substrate binding site. Heme c is bound by residues His-264, Cys-271, Cys-274, His-275, His-290, Cys-303, Cys-306, His-307, and His-382.

Belongs to the cytochrome c-552 family. Ca(2+) serves as cofactor. It depends on heme c as a cofactor.

The protein resides in the periplasm. The enzyme catalyses 6 Fe(III)-[cytochrome c] + NH4(+) + 2 H2O = 6 Fe(II)-[cytochrome c] + nitrite + 8 H(+). The protein operates within nitrogen metabolism; nitrate reduction (assimilation). Its function is as follows. Catalyzes the reduction of nitrite to ammonia, consuming six electrons in the process. The sequence is that of Cytochrome c-552 from Shewanella sp. (strain W3-18-1).